The primary structure comprises 44 residues: Photosystem I reaction center subunit IX (44 aa).

Residues 7–27 form a helical membrane-spanning segment; sequence YLSVAPVLTTLWFGSLAGLLI.

The protein belongs to the PsaJ family.

The protein resides in the plastid. It localises to the chloroplast thylakoid membrane. In terms of biological role, may help in the organization of the PsaE and PsaF subunits. This Liriodendron tulipifera (Tuliptree) protein is Photosystem I reaction center subunit IX.